A 65-amino-acid polypeptide reads, in one-letter code: Small ribosomal subunit protein bS21 (65 aa).

The protein belongs to the bacterial ribosomal protein bS21 family.

This chain is Small ribosomal subunit protein bS21, found in Chlorobaculum parvum (strain DSM 263 / NCIMB 8327) (Chlorobium vibrioforme subsp. thiosulfatophilum).